The following is a 94-amino-acid chain: Venom peptide SjAPI (94 aa).

Positions methionine 1–glycine 24 are cleaved as a signal peptide. Positions tryptophan 25–tryptophan 30 are excised as a propeptide. Disulfide bonds link cysteine 33-cysteine 70, cysteine 43-cysteine 66, cysteine 47-cysteine 62, cysteine 51-cysteine 92, and cysteine 72-cysteine 86. The 60-residue stretch at cysteine 33 to cysteine 92 folds into the TIL domain. Residues alanine 63–valine 65 are protease binding loop.

The protein belongs to the serine protease inhibitor-like (TIL domain-containing) family. As to expression, expressed by the venom gland.

It is found in the secreted. Recombinant protein inhibits both alpha-chymotrypsin (Ki=97.1 nM) and elastase (Ki=3700 nM). This Scorpiops jendeki (Scorpion) protein is Venom peptide SjAPI.